Consider the following 182-residue polypeptide: Large ribosomal subunit protein uL5 (182 aa).

It belongs to the universal ribosomal protein uL5 family. In terms of assembly, part of the 50S ribosomal subunit; part of the 5S rRNA/L5/L18/L25 subcomplex. Contacts the 5S rRNA and the P site tRNA. Forms a bridge to the 30S subunit in the 70S ribosome.

In terms of biological role, this is one of the proteins that bind and probably mediate the attachment of the 5S RNA into the large ribosomal subunit, where it forms part of the central protuberance. In the 70S ribosome it contacts protein S13 of the 30S subunit (bridge B1b), connecting the 2 subunits; this bridge is implicated in subunit movement. Contacts the P site tRNA; the 5S rRNA and some of its associated proteins might help stabilize positioning of ribosome-bound tRNAs. The polypeptide is Large ribosomal subunit protein uL5 (Coxiella burnetii (strain CbuG_Q212) (Coxiella burnetii (strain Q212))).